A 394-amino-acid chain; its full sequence is Dual specificity protein phosphatase 4 (394 aa).

Val-2 is modified (N-acetylvaline). The 119-residue stretch at 41 to 159 (SGGKCLLLDC…FSSEYPEFCS (119 aa)) folds into the Rhodanese domain. A Tyrosine-protein phosphatase domain is found at 195–336 (GPVEILPFLY…LLQFESQVLA (142 aa)). Cys-280 functions as the Phosphocysteine intermediate in the catalytic mechanism. Phosphoserine; by MAPK is present on residues Ser-386 and Ser-391.

It belongs to the protein-tyrosine phosphatase family. Non-receptor class dual specificity subfamily. In terms of assembly, hollow spherical complex composed of 24 subunits with pseudooctahedral symmetry, has a tetramer as the basic unit. In terms of processing, phosphorylation in the C-terminus by ERK1/2 inhibits proteasomal degradation and stabilizes the protein.

It localises to the nucleus. It catalyses the reaction O-phospho-L-tyrosyl-[protein] + H2O = L-tyrosyl-[protein] + phosphate. The catalysed reaction is O-phospho-L-seryl-[protein] + H2O = L-seryl-[protein] + phosphate. The enzyme catalyses O-phospho-L-threonyl-[protein] + H2O = L-threonyl-[protein] + phosphate. In terms of biological role, regulates mitogenic signal transduction by dephosphorylating both Thr and Tyr residues on MAP kinases ERK1 and ERK2. The sequence is that of Dual specificity protein phosphatase 4 (DUSP4) from Homo sapiens (Human).